An 89-amino-acid chain; its full sequence is HssA/B-like protein 16 (89 aa).

Belongs to the hssA/B family.

This Dictyostelium discoideum (Social amoeba) protein is HssA/B-like protein 16 (hssl16).